We begin with the raw amino-acid sequence, 141 residues long: Cystatin-13 (141 aa).

The first 24 residues, 1–24 (MARFLQTLLFLVIMVEFVSRRVEA), serve as a signal peptide directing secretion. A secondary area of contact region spans residues 76–80 (QITDS). Intrachain disulfides connect C94-C104 and C118-C138.

Belongs to the cystatin family. Expressed exclusively in testis. Found in spermatagonia, spermatocytes, round spermatids, elongating spermatids and spermatozoa.

It is found in the secreted. The protein resides in the cytoplasm. Its function is as follows. May perform a specialized role during sperm development and maturation. The polypeptide is Cystatin-13 (Mus musculus (Mouse)).